The sequence spans 138 residues: Large ribosomal subunit protein uL13 (138 aa).

Belongs to the universal ribosomal protein uL13 family. In terms of assembly, part of the 50S ribosomal subunit.

Its function is as follows. This protein is one of the early assembly proteins of the 50S ribosomal subunit, although it is not seen to bind rRNA by itself. It is important during the early stages of 50S assembly. The chain is Large ribosomal subunit protein uL13 from Picrophilus torridus (strain ATCC 700027 / DSM 9790 / JCM 10055 / NBRC 100828 / KAW 2/3).